Reading from the N-terminus, the 226-residue chain is Ribonuclease 3 (226 aa).

One can recognise an RNase III domain in the interval 7 to 129 (LPRLCRTLGY…IIGAIYLDSD (123 aa)). Residue E42 participates in Mg(2+) binding. The active site involves D46. The Mg(2+) site is built by D115 and E118. Residue E118 is part of the active site. One can recognise a DRBM domain in the interval 156-226 (DAKTLLQEYL…AAQVLELLKK (71 aa)).

It belongs to the ribonuclease III family. In terms of assembly, homodimer. The cofactor is Mg(2+).

The protein resides in the cytoplasm. The enzyme catalyses Endonucleolytic cleavage to 5'-phosphomonoester.. Digests double-stranded RNA. Involved in the processing of primary rRNA transcript to yield the immediate precursors to the large and small rRNAs (23S and 16S). Processes some mRNAs, and tRNAs when they are encoded in the rRNA operon. Processes pre-crRNA and tracrRNA of type II CRISPR loci if present in the organism. This is Ribonuclease 3 from Shewanella oneidensis (strain ATCC 700550 / JCM 31522 / CIP 106686 / LMG 19005 / NCIMB 14063 / MR-1).